Here is a 62-residue protein sequence, read N- to C-terminus: Large ribosomal subunit protein uL30 (62 aa).

It belongs to the universal ribosomal protein uL30 family. As to quaternary structure, part of the 50S ribosomal subunit.

The protein is Large ribosomal subunit protein uL30 of Pseudoalteromonas atlantica (strain T6c / ATCC BAA-1087).